We begin with the raw amino-acid sequence, 254 residues long: Geranylgeranylglyceryl phosphate synthase (254 aa).

The Mg(2+) site is built by Asp27 and Ser56. Residues 174-180, 212-213, and 234-235 each bind sn-glycerol 1-phosphate; these read YLEAGSG, GG, and GT.

Belongs to the GGGP/HepGP synthase family. Group II subfamily. In terms of assembly, homohexamer. Mg(2+) is required as a cofactor.

The protein resides in the cytoplasm. It catalyses the reaction sn-glycerol 1-phosphate + (2E,6E,10E)-geranylgeranyl diphosphate = sn-3-O-(geranylgeranyl)glycerol 1-phosphate + diphosphate. Its pathway is membrane lipid metabolism; glycerophospholipid metabolism. Functionally, prenyltransferase that catalyzes the transfer of the geranylgeranyl moiety of geranylgeranyl diphosphate (GGPP) to the C3 hydroxyl of sn-glycerol-1-phosphate (G1P). This reaction is the first ether-bond-formation step in the biosynthesis of archaeal membrane lipids. The chain is Geranylgeranylglyceryl phosphate synthase from Aeropyrum pernix (strain ATCC 700893 / DSM 11879 / JCM 9820 / NBRC 100138 / K1).